A 1300-amino-acid chain; its full sequence is Insulin receptor-related protein (1300 aa).

A signal peptide spans 1–26 (MAVPALWPWGVHLLMSLLSLGSGLDT). N-linked (GlcNAc...) asparagine glycans are attached at residues Asn-47 and Asn-100. 9 disulfides stabilise this stretch: Cys-214–Cys-222, Cys-216–Cys-228, Cys-229–Cys-237, Cys-233–Cys-246, Cys-249–Cys-258, Cys-262–Cys-274, Cys-280–Cys-300, Cys-304–Cys-317, and Cys-320–Cys-324. The N-linked (GlcNAc...) asparagine glycan is linked to Asn-311. N-linked (GlcNAc...) asparagine glycosylation is found at Asn-411, Asn-492, Asn-528, Asn-616, Asn-634, Asn-756, Asn-885, and Asn-898. Fibronectin type-III domains follow at residues 483-603 (QTRT…TLPA) and 607-707 (VPQD…AQEV). Cys-657 and Cys-864 form a disulfide bridge. Residues 747 to 921 (EAGLLRLGKN…LEEEDTGGMR (175 aa)) lie on the Extracellular side of the membrane. One can recognise a Fibronectin type-III 3 domain in the interval 818 to 913 (IPGKVAWKAA…GVTFYITDLE (96 aa)). A helical transmembrane segment spans residues 922–943 (IFLTVTPVGFMLLVTLAALGFF). The Cytoplasmic segment spans residues 944–1300 (YSRKRNSTLY…YSAPNGGPGH (357 aa)). One can recognise a Protein kinase domain in the interval 979-1254 (IAIIRELGQG…RIQDELRPSF (276 aa)). ATP contacts are provided by residues 985–993 (LGQGSFGMV) and Lys-1013. Asp-1115 acts as the Proton acceptor in catalysis. A phosphotyrosine; by autocatalysis mark is found at Tyr-1145 and Tyr-1146. The disordered stretch occupies residues 1273–1300 (LPTEAEPDSPPTLNGASDYSAPNGGPGH).

It belongs to the protein kinase superfamily. Tyr protein kinase family. Insulin receptor subfamily. In terms of assembly, probable tetramer of 2 alpha and 2 beta chains linked by disulfide bonds. The alpha chains contribute to the formation of the ligand-binding domain, while the beta chains carry the kinase domain. Post-translationally, autophosphorylated on tyrosine residues between pH 7.9 and pH 10.5. In terms of tissue distribution, highly expressed in the islets as well as in pancreatic beta-cells.

It localises to the membrane. The catalysed reaction is L-tyrosyl-[protein] + ATP = O-phospho-L-tyrosyl-[protein] + ADP + H(+). In terms of biological role, receptor with tyrosine-protein kinase activity. Functions as a pH sensing receptor which is activated by increased extracellular pH. Activates an intracellular signaling pathway that involves IRS1 and AKT1/PKB. This is Insulin receptor-related protein (Insrr) from Mus musculus (Mouse).